A 251-amino-acid polypeptide reads, in one-letter code: Flap endonuclease Xni (251 aa).

D104 contacts Mg(2+). Residues 160 to 249 (VLPQQLPDYW…IDGNLQQLRL (90 aa)) form the 5'-3' exonuclease domain. L171, A172, P180, V182, and I185 together coordinate K(+). The segment at 184-189 (GIGPKS) is interaction with DNA.

It belongs to the Xni family. Mg(2+) serves as cofactor. It depends on K(+) as a cofactor.

Its function is as follows. Has flap endonuclease activity. During DNA replication, flap endonucleases cleave the 5'-overhanging flap structure that is generated by displacement synthesis when DNA polymerase encounters the 5'-end of a downstream Okazaki fragment. This is Flap endonuclease Xni from Citrobacter koseri (strain ATCC BAA-895 / CDC 4225-83 / SGSC4696).